A 133-amino-acid polypeptide reads, in one-letter code: Large ribosomal subunit protein uL15 (133 aa).

Residues 1–64 (MGLENLKPAK…QPLQRRLPKI (64 aa)) form a disordered region.

The protein belongs to the universal ribosomal protein uL15 family. In terms of assembly, part of the 50S ribosomal subunit.

Functionally, binds to the 23S rRNA. In Helicobacter pylori (strain G27), this protein is Large ribosomal subunit protein uL15.